The following is a 304-amino-acid chain: Protease HtpX homolog (304 aa).

2 helical membrane-spanning segments follow: residues 14–34 and 39–59; these read VFII…IGII and YLNG…IMVM. A Zn(2+)-binding site is contributed by histidine 144. Glutamate 145 is an active-site residue. Histidine 148 serves as a coordination point for Zn(2+). Helical transmembrane passes span 159–179 and 202–222; these read IAIA…RLIF and IIIY…ATAI. Position 231 (glutamate 231) interacts with Zn(2+). A disordered region spans residues 275-304; that stretch reads SSPLKSKKDKPGLFDSHPPISSRIERLENM.

This sequence belongs to the peptidase M48B family. The cofactor is Zn(2+).

The protein localises to the cell membrane. This is Protease HtpX homolog from Listeria innocua serovar 6a (strain ATCC BAA-680 / CLIP 11262).